The sequence spans 202 residues: uncharacterized protein (202 aa).

Helical transmembrane passes span 34-54 (AAYVISNTIIFGVYAIIQARI), 102-122 (MGVAIMAFMHLYMGYAQPLVI), and 125-145 (ILPLISLFTNNLVSIYIFNKA). The segment at 165–202 (NKPAAAVTGTSSNSNNASAKSDGPTITELNENETEKSS) is disordered. Residues 168-185 (AAAVTGTSSNSNNASAKS) are compositionally biased toward low complexity. 2 positions are modified to phosphoserine: serine 185 and serine 201.

The protein belongs to the PHO88 family.

It is found in the endoplasmic reticulum membrane. This is an uncharacterized protein from Schizosaccharomyces pombe (strain 972 / ATCC 24843) (Fission yeast).